An 874-amino-acid chain; its full sequence is Alanine--tRNA ligase (874 aa).

4 residues coordinate Zn(2+): H562, H566, C663, and H667.

The protein belongs to the class-II aminoacyl-tRNA synthetase family. The cofactor is Zn(2+).

The protein localises to the cytoplasm. It carries out the reaction tRNA(Ala) + L-alanine + ATP = L-alanyl-tRNA(Ala) + AMP + diphosphate. In terms of biological role, catalyzes the attachment of alanine to tRNA(Ala) in a two-step reaction: alanine is first activated by ATP to form Ala-AMP and then transferred to the acceptor end of tRNA(Ala). Also edits incorrectly charged Ser-tRNA(Ala) and Gly-tRNA(Ala) via its editing domain. This chain is Alanine--tRNA ligase, found in Bordetella pertussis (strain Tohama I / ATCC BAA-589 / NCTC 13251).